We begin with the raw amino-acid sequence, 966 residues long: DNA mismatch repair protein MutS (966 aa).

709–716 serves as a coordination point for ATP; sequence GPNMAGKS. A disordered region spans residues 894–914; that stretch reads EGQRPPSSPAQPPAPPAPVVV. Pro residues predominate over residues 899–912; sequence PSSPAQPPAPPAPV.

Belongs to the DNA mismatch repair MutS family.

This protein is involved in the repair of mismatches in DNA. It is possible that it carries out the mismatch recognition step. This protein has a weak ATPase activity. The sequence is that of DNA mismatch repair protein MutS from Chloroflexus aurantiacus (strain ATCC 29366 / DSM 635 / J-10-fl).